The following is a 240-amino-acid chain: Tumor protein p53-inducible nuclear protein 1 (240 aa).

The LIR motif lies at 25–37 (EKEDDEWILVDFI).

In terms of assembly, interacts with p53/TP53 and HIPK2. Interacts with PRKCG, GABARAP, GABARAPL1, GABARAPL2, MAP1LC3A, MAP1LC3B and MAP1LC3C. Ubiquitously expressed.

The protein resides in the cytoplasm. The protein localises to the cytosol. It localises to the nucleus. It is found in the PML body. Its subcellular location is the cytoplasmic vesicle. The protein resides in the autophagosome. Its function is as follows. Antiproliferative and proapoptotic protein involved in cell stress response which acts as a dual regulator of transcription and autophagy. Acts as a positive regulator of autophagy. In response to cellular stress or activation of autophagy, relocates to autophagosomes where it interacts with autophagosome-associated proteins GABARAP, GABARAPL1/L2, MAP1LC3A/B/C and regulates autophagy. Acts as an antioxidant and plays a major role in p53/TP53-driven oxidative stress response. Possesses both a p53/TP53-independent intracellular reactive oxygen species (ROS) regulatory function and a p53/TP53-dependent transcription regulatory function. Positively regulates p53/TP53 and p73/TP73 and stimulates their capacity to induce apoptosis and regulate cell cycle. In response to double-strand DNA breaks, promotes p53/TP53 phosphorylation on 'Ser-46' and subsequent apoptosis. Acts as a tumor suppressor by inducing cell death by an autophagy and caspase-dependent mechanism. Can reduce cell migration by regulating the expression of SPARC. The sequence is that of Tumor protein p53-inducible nuclear protein 1 (TP53INP1) from Homo sapiens (Human).